Consider the following 402-residue polypeptide: Multidrug resistance protein MdtH (402 aa).

Over 1-12 the chain is Cytoplasmic; the sequence is MSRVSQARNLGK. Residues 13-33 traverse the membrane as a helical segment; the sequence is YFLLIDNMLVVLGFFVVFPLI. At 34–98 the chain is on the periplasmic side; that stretch reads SIRFIDQMGW…GFATMGIAHE (65 aa). Residues 99-116 form a helical membrane-spanning segment; the sequence is PWLLWFSCFLSGLGGTLF. At 117 to 138 the chain is on the cytoplasmic side; that stretch reads DPPRSALVVKLIRPEQRGRFFS. Residues 139 to 159 traverse the membrane as a helical segment; that stretch reads LLMMQDSAGAVIGALLGSWLL. Residues 160–164 lie on the Periplasmic side of the membrane; that stretch reads QYDFR. The chain crosses the membrane as a helical span at residues 165–185; that stretch reads LVCATGAILFILCALFNAWLL. The Cytoplasmic portion of the chain corresponds to 186–213; sequence PAWKLSTVRTPVREGMRRVMSDKRFVTY. The chain crosses the membrane as a helical span at residues 214–234; the sequence is VLTLAGYYMLAVQVMLMLPIM. Residues 235 to 243 are Periplasmic-facing; sequence VNDIAGSPA. A helical transmembrane segment spans residues 244-264; it reads AVKWMYAIEACLSLTLLYPIA. Over 265 to 276 the chain is Cytoplasmic; sequence RWSEKRFRLEHR. Residues 277 to 297 traverse the membrane as a helical segment; sequence LMAGLLVMSLSMIPIGMVGNL. Topologically, residues 298 to 299 are periplasmic; sequence QQ. A helical transmembrane segment spans residues 300-320; that stretch reads LFTLICAFYIGSVIAEPARET. Residues 321–339 are Cytoplasmic-facing; that stretch reads LSASLADARARGSYMGFSR. The helical transmembrane segment at 340 to 360 threads the bilayer; it reads LGLAIGGAIGYIGGGWLFDMG. The Periplasmic segment spans residues 361 to 367; sequence KALTQPE. A helical membrane pass occupies residues 368 to 388; it reads LPWMMLGIIGFITFLALGWQF. At 389–402 the chain is on the cytoplasmic side; sequence SHKRTPRRMLEPGA.

Belongs to the major facilitator superfamily. DHA1 family. MdtH (TC 2.A.1.2.21) subfamily.

The protein localises to the cell inner membrane. The sequence is that of Multidrug resistance protein MdtH from Salmonella paratyphi C (strain RKS4594).